The primary structure comprises 37 residues: Mating pheromone Er-22 (37 aa).

3 disulfide bridges follow: C3–C18, C10–C32, and C15–C24.

The protein resides in the secreted. In terms of biological role, mating ciliate pheromones (or gamones) are diffusible extracellular communication signals that distinguish different intraspecific classes of cells commonly referred to as 'mating types'. They prepare the latter for conjugation by changing their cell surface properties. This chain is Mating pheromone Er-22 (MAT22), found in Euplotes raikovi.